Here is a 460-residue protein sequence, read N- to C-terminus: Indoleacetamide hydrolase (460 aa).

Catalysis depends on charge relay system residues Lys71 and Ser146. Residue Ser169 is the Acyl-ester intermediate of the active site.

The protein belongs to the amidase family.

It participates in plant hormone metabolism; auxin biosynthesis. Its function is as follows. Hydrolyzes indole-3-acetamide (IAM) into indole-3-acetic acid (IAA). This chain is Indoleacetamide hydrolase (iaaH), found in Pantoea agglomerans pv. gypsophilae (Erwinia herbicola).